Here is a 282-residue protein sequence, read N- to C-terminus: Putative peroxisomal biogenesis factor 19 (282 aa).

A disordered region spans residues 73-95 (QEEAMKKAGADPSEGEGEQPLDP). Residue Cys279 is modified to Cysteine methyl ester. Cys279 carries S-farnesyl cysteine lipidation. Positions 280-282 (SIM) are cleaved as a propeptide — removed in mature form.

It belongs to the peroxin-19 family.

The protein resides in the peroxisome. This is Putative peroxisomal biogenesis factor 19 (prx-19) from Caenorhabditis elegans.